The chain runs to 232 residues: Fibrillarin-like rRNA/tRNA 2'-O-methyltransferase (232 aa).

S-adenosyl-L-methionine-binding positions include Thr-87 to Thr-88, Glu-105 to Phe-106, Asp-130 to Ala-131, and Asp-150 to Gln-153.

The protein belongs to the methyltransferase superfamily. Fibrillarin family. Interacts with nop5. Component of box C/D small ribonucleoprotein (sRNP) particles that contain rpl7ae, FlpA and nop5, plus a guide RNA.

In terms of biological role, involved in pre-rRNA and tRNA processing. Utilizes the methyl donor S-adenosyl-L-methionine to catalyze the site-specific 2'-hydroxyl methylation of ribose moieties in rRNA and tRNA. Site specificity is provided by a guide RNA that base pairs with the substrate. Methylation occurs at a characteristic distance from the sequence involved in base pairing with the guide RNA. The polypeptide is Fibrillarin-like rRNA/tRNA 2'-O-methyltransferase (Methanococcus maripaludis (strain C7 / ATCC BAA-1331)).